The chain runs to 312 residues: Holliday junction branch migration complex subunit RuvB (312 aa).

Residues 1–168 (MKTNNEFRPQ…FGHVFYLSEY (168 aa)) are large ATPase domain (RuvB-L). ATP-binding positions include Arg8, Gly49, Lys52, Thr53, Thr54, 115–117 (EDF), Arg158, Tyr168, and Arg206. Thr53 is a binding site for Mg(2+). The interval 169-234 (ETSEIAAIIL…NIKNIFEKIQ (66 aa)) is small ATPAse domain (RuvB-S). Positions 237-312 (DFGLEEQDIN…EFLKNNQLIK (76 aa)) are head domain (RuvB-H). Positions 290 and 295 each coordinate DNA.

It belongs to the RuvB family. Homohexamer. Forms an RuvA(8)-RuvB(12)-Holliday junction (HJ) complex. HJ DNA is sandwiched between 2 RuvA tetramers; dsDNA enters through RuvA and exits via RuvB. An RuvB hexamer assembles on each DNA strand where it exits the tetramer. Each RuvB hexamer is contacted by two RuvA subunits (via domain III) on 2 adjacent RuvB subunits; this complex drives branch migration. In the full resolvosome a probable DNA-RuvA(4)-RuvB(12)-RuvC(2) complex forms which resolves the HJ.

The protein localises to the cytoplasm. The catalysed reaction is ATP + H2O = ADP + phosphate + H(+). The RuvA-RuvB-RuvC complex processes Holliday junction (HJ) DNA during genetic recombination and DNA repair, while the RuvA-RuvB complex plays an important role in the rescue of blocked DNA replication forks via replication fork reversal (RFR). RuvA specifically binds to HJ cruciform DNA, conferring on it an open structure. The RuvB hexamer acts as an ATP-dependent pump, pulling dsDNA into and through the RuvAB complex. RuvB forms 2 homohexamers on either side of HJ DNA bound by 1 or 2 RuvA tetramers; 4 subunits per hexamer contact DNA at a time. Coordinated motions by a converter formed by DNA-disengaged RuvB subunits stimulates ATP hydrolysis and nucleotide exchange. Immobilization of the converter enables RuvB to convert the ATP-contained energy into a lever motion, pulling 2 nucleotides of DNA out of the RuvA tetramer per ATP hydrolyzed, thus driving DNA branch migration. The RuvB motors rotate together with the DNA substrate, which together with the progressing nucleotide cycle form the mechanistic basis for DNA recombination by continuous HJ branch migration. Branch migration allows RuvC to scan DNA until it finds its consensus sequence, where it cleaves and resolves cruciform DNA. This is Holliday junction branch migration complex subunit RuvB from Ureaplasma urealyticum serovar 10 (strain ATCC 33699 / Western).